The primary structure comprises 60 residues: Large ribosomal subunit protein uL30 (60 aa).

It belongs to the universal ribosomal protein uL30 family. In terms of assembly, part of the 50S ribosomal subunit.

The protein is Large ribosomal subunit protein uL30 of Cupriavidus metallidurans (strain ATCC 43123 / DSM 2839 / NBRC 102507 / CH34) (Ralstonia metallidurans).